A 202-amino-acid polypeptide reads, in one-letter code: dITP/XTP pyrophosphatase (202 aa).

11–16 (TNNANK) serves as a coordination point for substrate. Catalysis depends on Asp73, which acts as the Proton acceptor. Asp73 is a Mg(2+) binding site. Substrate contacts are provided by residues Ser74, 155–158 (FGYD), Lys178, and 183–184 (HR).

This sequence belongs to the HAM1 NTPase family. Homodimer. Mg(2+) is required as a cofactor.

The catalysed reaction is XTP + H2O = XMP + diphosphate + H(+). It carries out the reaction dITP + H2O = dIMP + diphosphate + H(+). It catalyses the reaction ITP + H2O = IMP + diphosphate + H(+). In terms of biological role, pyrophosphatase that catalyzes the hydrolysis of nucleoside triphosphates to their monophosphate derivatives, with a high preference for the non-canonical purine nucleotides XTP (xanthosine triphosphate), dITP (deoxyinosine triphosphate) and ITP. Seems to function as a house-cleaning enzyme that removes non-canonical purine nucleotides from the nucleotide pool, thus preventing their incorporation into DNA/RNA and avoiding chromosomal lesions. The chain is dITP/XTP pyrophosphatase from Lactiplantibacillus plantarum (strain ATCC BAA-793 / NCIMB 8826 / WCFS1) (Lactobacillus plantarum).